The following is a 298-amino-acid chain: tRNA-uridine aminocarboxypropyltransferase 2 (298 aa).

An N-acetylmethionine modification is found at M1. Residues 1-52 (MESQKEARILQEPVARPPGASRSQTPNAKERQEGGPVPAAAALGAEADDDSA) form a disordered region. S132 carries the post-translational modification Phosphoserine. The DXTW signature appears at 178–181 (DGTW).

Belongs to the TDD superfamily. DTWD2 family.

It is found in the nucleus. Its subcellular location is the cytoplasm. It catalyses the reaction a uridine in tRNA + S-adenosyl-L-methionine = a 3-[(3S)-3-amino-3-carboxypropyl]uridine in tRNA + S-methyl-5'-thioadenosine + H(+). Functionally, catalyzes the formation of 3-(3-amino-3-carboxypropyl)uridine (acp3U) at position 20a in the D-loop of several cytoplasmic tRNAs (acp3U(20a)). Also has a weak activity to form acp3U at position 20 in the D-loop of tRNAs (acp3U(20)). Involved in glycoRNA biosynthesis by mediating formation of acp3U, which acts as an attachment site for N-glycans on tRNAs. GlycoRNAs consist of RNAs modified with secretory N-glycans that are presented on the cell surface. In Macaca fascicularis (Crab-eating macaque), this protein is tRNA-uridine aminocarboxypropyltransferase 2.